Reading from the N-terminus, the 266-residue chain is Undecaprenyl-diphosphatase (266 aa).

The next 8 membrane-spanning stretches (helical) occupy residues 1–21 (MTWL…FLPI), 39–59 (QGLA…MVYF), 87–107 (WAVI…DSWI), 111–131 (LRSA…LGMA), 143–163 (FTLK…IPGT), 186–206 (FSFL…GLEL), 217–237 (EIAG…HLFL), and 243–263 (IGFM…LVWL).

This sequence belongs to the UppP family.

The protein resides in the cell inner membrane. The enzyme catalyses di-trans,octa-cis-undecaprenyl diphosphate + H2O = di-trans,octa-cis-undecaprenyl phosphate + phosphate + H(+). Its function is as follows. Catalyzes the dephosphorylation of undecaprenyl diphosphate (UPP). Confers resistance to bacitracin. The protein is Undecaprenyl-diphosphatase of Hahella chejuensis (strain KCTC 2396).